The primary structure comprises 200 residues: Small ribosomal subunit protein mS26 (200 aa).

The N-terminal 27 residues, methionine 1 to arginine 27, are a transit peptide targeting the mitochondrion. N6-acetyllysine is present on lysine 159.

This sequence belongs to the mitochondrion-specific ribosomal protein mS26 family. As to quaternary structure, component of the mitochondrial ribosome small subunit (28S) which comprises a 12S rRNA and about 30 distinct proteins.

Its subcellular location is the mitochondrion. This is Small ribosomal subunit protein mS26 (Mrps26) from Rattus norvegicus (Rat).